Reading from the N-terminus, the 731-residue chain is Two pore channel protein 2 (731 aa).

Residues 1-68 lie on the Cytoplasmic side of the membrane; that stretch reads MAAEEQPLLG…RWYYSNVCQR (68 aa). The chain crosses the membrane as a helical span at residues 69–89; the sequence is VLGFIIFLILILAFVEVPSSF. The Extracellular portion of the chain corresponds to 90–111; the sequence is TKTADVRYRSQPWQPPCGLTET. The chain crosses the membrane as a helical span at residues 112–132; sequence IEAFCLLAFLVDLSVKGYLVG. Topologically, residues 133-139 are cytoplasmic; it reads QAQLQQN. A helical transmembrane segment spans residues 140–160; that stretch reads LWLLAYFMVLVVSVVDWIVSL. At 161 to 167 the chain is on the extracellular side; the sequence is SLACEEP. Residues 168–188 form a helical membrane-spanning segment; that stretch reads LRMRRLLRPFFLLQNSSMMKK. The segment at 187–191 is interaction with phosphatidylinositol 3,5-bisphosphate; it reads KKTLK. At 189–203 the chain is on the cytoplasmic side; the sequence is TLKCIRWSLPEMASV. The chain crosses the membrane as a helical span at residues 204-224; that stretch reads GLLLAIHLCLFTIIGMLLFTI. The Extracellular portion of the chain corresponds to 225–238; that stretch reads GEKDEAQDQERLAY. The segment at residues 239–263 is an intramembrane region (helical; Pore-forming); sequence FRNLPEALTSLLVLLTTSNNPDVMI. The Extracellular portion of the chain corresponds to 264–270; that stretch reads PAYTQNR. A helical membrane pass occupies residues 271–291; it reads AFALFFIVFTLIGSLFLMNLL. Residues 292–417 are Cytoplasmic-facing; it reads TAIIYNQFRG…TAQFIFSHHY (126 aa). A helical transmembrane segment spans residues 418-438; that stretch reads FDYLGNLVALGNLLSICVFLV. Topologically, residues 439 to 449 are extracellular; it reads LDSDLLPGERD. The chain crosses the membrane as a helical span at residues 450–470; that stretch reads DFVLGILDYIFILYYLLELLF. At 471–486 the chain is on the cytoplasmic side; that stretch reads KVFALGLPGYLSYHSN. A helical membrane pass occupies residues 487 to 507; it reads VFDGLLTIILLVSEICTLAVY. The Extracellular segment spans residues 508-524; the sequence is RLPHSGWKPEQYGPLSL. The helical transmembrane segment at 525-542 threads the bilayer; the sequence is WDMTRLMNTLIVFRFLRI. Residues 543–564 are Cytoplasmic-facing; the sequence is IPNIKPMAEVANTILGLIPNLR. A helical membrane pass occupies residues 565-585; that stretch reads AFGGILVVAYYVFAMIGINLF. Topologically, residues 586–618 are extracellular; that stretch reads RGVIVPPGNSSLVPDNNSAVCGSFEQLGYWPNN. Asparagine 594 and asparagine 601 each carry an N-linked (GlcNAc...) asparagine glycan. An intramembrane region (helical; Pore-forming) is located at residues 619 to 641; sequence FDDFAAALITLWNVMVVNNWQVI. Residues 642–656 are Extracellular-facing; the sequence is LEAYKRYAGPWSMVY. A helical transmembrane segment spans residues 657–677; the sequence is FVLWWLVSSVIWINLFLALLL. Residues 678–731 lie on the Cytoplasmic side of the membrane; it reads ENFLHRWDPQGHKQLLVGTKQMSVELMFRDILEEPKEEELMEKLHKHPHLHLCR.

It belongs to the calcium channel alpha-1 subunit (TC 1.A.1.11) family. Two pore calcium channel subfamily. As to quaternary structure, homodimer. Interacts with LRRK2. Interacts with HAX1. Interacts with MTOR; the interaction is required for TPCN2 ATP sensitivity. Found in a complex with LSM12, TPCN1 and TPCN2. Interacts with LSM12. N-glycosylated. In terms of tissue distribution, widely expressed. Highly expressed in macrophages. Expressed in pigmented cells.

The protein resides in the late endosome membrane. It is found in the lysosome membrane. The protein localises to the melanosome membrane. It catalyses the reaction Ca(2+)(in) = Ca(2+)(out). It carries out the reaction Na(+)(in) = Na(+)(out). Its activity is regulated as follows. Regulated by Mg(2+) ions, cytosolic Mg(2+) selectively inhibits outward current while lysosomal Mg(2+) modestly inhibits both the outward and inward currents. In the absence of Mg(2+), NAADP readily activates TPCN2, with properties similar to PI(3,5)P2. Na(+) current is inhibited by ATP in a MTORC-dependent manner. ATP sensitivity is independent of PI(3,5)P2. Both current elicited by PI(3,5)P2 as well as NAADP are inhibited by tetrandrine. Functionally, intracellular channel initially characterized as a non-selective Ca(2+)-permeable channel activated by NAADP (nicotinic acid adenine dinucleotide phosphate), it is also a highly-selective Na(+) channel activated directly by PI(3,5)P2 (phosphatidylinositol 3,5-bisphosphate). Localizes to the lysosomal and late endosome membranes where it regulates organellar membrane excitability, membrane trafficking, and pH homeostasis. Is associated with a plethora of physiological processes, including mTOR-dependent nutrient sensing, skin pigmentation and autophagy. Ion selectivity is not fixed but rather agonist-dependent and under defined ionic conditions, can be readily activated by both NAADP and PI(3,5)P2. As calcium channel, it increases the pH in the lysosomal lumen, as sodium channel, it promotes lysosomal exocytosis. Plays a crucial role in endolysosomal trafficking in the endolysosomal degradation pathway and is potentially involved in the homeostatic control of many macromolecules and cell metabolites. Also expressed in melanosomes of pigmented cells where mediates a Ca(2+) channel and/or PI(3,5)P2-activated melanosomal Na(+) channel to acidify pH and inhibit tyrosinase activity required for melanogenesis and pigmentation. Unlike the voltage-dependent TPCN1, TPCN2 is voltage independent and can be activated solely by PI(3,5)P2 binding. In contrast, PI(4,5)P2, PI(3,4)P2, PI(3)P and PI(5)P have no obvious effect on channel activation. In terms of biological role, (Microbial infection) During Ebola virus (EBOV) infection, controls the movement of endosomes containing virus particles and is required by EBOV to escape from the endosomal network into the cell cytoplasm. The sequence is that of Two pore channel protein 2 from Mus musculus (Mouse).